The following is a 98-amino-acid chain: Small ribosomal subunit protein bS6c (98 aa).

Belongs to the bacterial ribosomal protein bS6 family.

The protein resides in the plastid. The protein localises to the chloroplast. Functionally, binds together with bS18 to 16S ribosomal RNA. This chain is Small ribosomal subunit protein bS6c, found in Phaeodactylum tricornutum (strain CCAP 1055/1).